Consider the following 204-residue polypeptide: Auxin-binding protein 4 (204 aa).

Positions 1-41 (MVRRRPATGAAPRPHLAAVGRGLLLASVLAAAASSLPVAES) are cleaved as a signal peptide. Cysteine 43 and cysteine 196 are joined by a disulfide. Zn(2+) is bound by residues histidine 98, histidine 100, and glutamate 104. N-linked (GlcNAc...) asparagine glycosylation occurs at asparagine 136. Histidine 147 provides a ligand contact to Zn(2+). Residues 201-204 (KDEL) carry the Prevents secretion from ER motif.

As to quaternary structure, homodimer.

Its subcellular location is the endoplasmic reticulum lumen. This is probably a receptor for the plant hormone auxin. This Zea mays (Maize) protein is Auxin-binding protein 4 (ABP4).